A 535-amino-acid polypeptide reads, in one-letter code: CTP synthase (535 aa).

Residues 1–268 (MSTKYIFVTG…DQIVCDHLKL (268 aa)) form an amidoligase domain region. Ser14 is a CTP binding site. Ser14 is a UTP binding site. 15 to 20 (SIGKGI) is a binding site for ATP. Residue Tyr55 participates in L-glutamine binding. Asp72 lines the ATP pocket. Mg(2+) contacts are provided by Asp72 and Glu142. CTP-binding positions include 149–151 (DIE), 189–194 (KTKPTQ), and Lys225. UTP contacts are provided by residues 189 to 194 (KTKPTQ) and Lys225. In terms of domain architecture, Glutamine amidotransferase type-1 spans 293–535 (KISLVGKYVE…FVTAAVENSN (243 aa)). Position 355 (Gly355) interacts with L-glutamine. Cys382 serves as the catalytic Nucleophile; for glutamine hydrolysis. L-glutamine is bound by residues 383 to 386 (LGMQ), Glu406, and Arg464. Catalysis depends on residues His509 and Glu511.

It belongs to the CTP synthase family. Homotetramer.

It catalyses the reaction UTP + L-glutamine + ATP + H2O = CTP + L-glutamate + ADP + phosphate + 2 H(+). It carries out the reaction L-glutamine + H2O = L-glutamate + NH4(+). The catalysed reaction is UTP + NH4(+) + ATP = CTP + ADP + phosphate + 2 H(+). It functions in the pathway pyrimidine metabolism; CTP biosynthesis via de novo pathway; CTP from UDP: step 2/2. Its activity is regulated as follows. Allosterically activated by GTP, when glutamine is the substrate; GTP has no effect on the reaction when ammonia is the substrate. The allosteric effector GTP functions by stabilizing the protein conformation that binds the tetrahedral intermediate(s) formed during glutamine hydrolysis. Inhibited by the product CTP, via allosteric rather than competitive inhibition. Catalyzes the ATP-dependent amination of UTP to CTP with either L-glutamine or ammonia as the source of nitrogen. Regulates intracellular CTP levels through interactions with the four ribonucleotide triphosphates. The sequence is that of CTP synthase from Streptococcus pneumoniae (strain ATCC BAA-255 / R6).